We begin with the raw amino-acid sequence, 443 residues long: Ribosomal protein uS12 methylthiotransferase RimO (443 aa).

An MTTase N-terminal domain is found at 5-116; that stretch reads PTIAINHLGC…IVDIIRRTEQ (112 aa). The [4Fe-4S] cluster site is built by cysteine 14, cysteine 50, cysteine 79, cysteine 154, cysteine 158, and cysteine 161. Positions 140 to 369 constitute a Radical SAM core domain; sequence TTNEAIAYLR…MALQQPISAQ (230 aa). The region spanning 372–438 is the TRAM domain; that stretch reads AACLGQTLDV…DYDLYGMTAE (67 aa).

The protein belongs to the methylthiotransferase family. RimO subfamily. Requires [4Fe-4S] cluster as cofactor.

Its subcellular location is the cytoplasm. It carries out the reaction L-aspartate(89)-[ribosomal protein uS12]-hydrogen + (sulfur carrier)-SH + AH2 + 2 S-adenosyl-L-methionine = 3-methylsulfanyl-L-aspartate(89)-[ribosomal protein uS12]-hydrogen + (sulfur carrier)-H + 5'-deoxyadenosine + L-methionine + A + S-adenosyl-L-homocysteine + 2 H(+). Catalyzes the methylthiolation of an aspartic acid residue of ribosomal protein uS12. This is Ribosomal protein uS12 methylthiotransferase RimO from Synechocystis sp. (strain ATCC 27184 / PCC 6803 / Kazusa).